Reading from the N-terminus, the 101-residue chain is Phosphoribosyl-AMP cyclohydrolase (101 aa).

Position 71 (Asp-71) interacts with Mg(2+). Cys-72 lines the Zn(2+) pocket. Residues Asp-73 and Asp-75 each contribute to the Mg(2+) site. Residues Cys-88 and Cys-95 each contribute to the Zn(2+) site.

It belongs to the PRA-CH family. Homodimer. The cofactor is Mg(2+). Zn(2+) serves as cofactor.

It localises to the cytoplasm. The enzyme catalyses 1-(5-phospho-beta-D-ribosyl)-5'-AMP + H2O = 1-(5-phospho-beta-D-ribosyl)-5-[(5-phospho-beta-D-ribosylamino)methylideneamino]imidazole-4-carboxamide. The protein operates within amino-acid biosynthesis; L-histidine biosynthesis; L-histidine from 5-phospho-alpha-D-ribose 1-diphosphate: step 3/9. Catalyzes the hydrolysis of the adenine ring of phosphoribosyl-AMP. This chain is Phosphoribosyl-AMP cyclohydrolase, found in Bacillus cereus (strain AH187).